A 459-amino-acid chain; its full sequence is Putative BTB/POZ domain-containing protein R541 (459 aa).

In terms of domain architecture, BTB spans 76–143 (NHITINVGGK…NQKSTNIELY (68 aa)).

It belongs to the mimivirus BTB/WD family.

The chain is Putative BTB/POZ domain-containing protein R541 from Acanthamoeba polyphaga mimivirus (APMV).